The following is a 383-amino-acid chain: tRNA (adenine(58)-N(1))-methyltransferase catalytic subunit TRM61 (383 aa).

Residues Val-94, 121–124 (SGSF), Glu-139, Arg-144, 168–169 (DV), and Asp-203 each bind S-adenosyl-L-methionine. Ser-302 carries the phosphoserine modification.

The protein belongs to the class I-like SAM-binding methyltransferase superfamily. TRM61 family. In terms of assembly, heterotetramer; composed of two copies of TRM6/GCD10 and two copies of TRM61/GCD14.

It localises to the nucleus. It catalyses the reaction adenosine(58) in tRNA + S-adenosyl-L-methionine = N(1)-methyladenosine(58) in tRNA + S-adenosyl-L-homocysteine + H(+). Its function is as follows. Catalytic subunit of tRNA (adenine-N(1)-)-methyltransferase, which catalyzes the formation of N(1)-methyladenine at position 58 (m1A58) in initiator methionyl-tRNA. GCD14 is also required for repression of GCN4 mRNA translation by the upstream open reading frames (uORFs) under conditions of amino acid sufficiency. This chain is tRNA (adenine(58)-N(1))-methyltransferase catalytic subunit TRM61 (GCD14), found in Saccharomyces cerevisiae (strain ATCC 204508 / S288c) (Baker's yeast).